Here is a 202-residue protein sequence, read N- to C-terminus: Imidazoleglycerol-phosphate dehydratase (202 aa).

The protein belongs to the imidazoleglycerol-phosphate dehydratase family.

The protein localises to the cytoplasm. It carries out the reaction D-erythro-1-(imidazol-4-yl)glycerol 3-phosphate = 3-(imidazol-4-yl)-2-oxopropyl phosphate + H2O. It functions in the pathway amino-acid biosynthesis; L-histidine biosynthesis; L-histidine from 5-phospho-alpha-D-ribose 1-diphosphate: step 6/9. The chain is Imidazoleglycerol-phosphate dehydratase from Rhizobium etli (strain CIAT 652).